A 245-amino-acid polypeptide reads, in one-letter code: Transmembrane and ubiquitin-like domain-containing protein 1 (245 aa).

A required to release iHOPS from membranes region spans residues 2 to 30 (ALIEGVGDEVTVLFSVLACLLVLALAWVS). The chain crosses the membrane as a helical span at residues 11 to 31 (VTVLFSVLACLLVLALAWVST). Polar residues predominate over residues 34 to 51 (TESTDPLPQSSGTTTPAQ). The segment at 34–100 (TESTDPLPQS…ASTPPDSPQE (67 aa)) is disordered. A phosphoserine mark is found at S73, S97, and S126. A Ubiquitin-like domain is found at 102 to 175 (LLLRLKFLND…LHCHVSTRVG (74 aa)). 2 helical membrane-spanning segments follow: residues 194-214 (IGSL…YCQI) and 219-239 (FFPL…SLLA).

Interacts with EEF1A1, GRIA2, GRIP1. Interacts with CAMLG, TUBG1. Interacts with NPM1 and CDKN2A; TMUB1 can enhance interaction between NPM1 and CDKN2A and is proposed to bridge the proteins; proposed to be mediated by iHOPS. Interacts with ERLIN2 and AMFR; TMUB1 promotes the interaction of ERLIN2 with AMFR. Processed by regulated intramembrane proteolysis (RIP) in the N-terminus to release iHOPS from membranes.

Its subcellular location is the membrane. The protein localises to the postsynaptic cell membrane. The protein resides in the recycling endosome. It is found in the cytoplasm. It localises to the cytoskeleton. Its subcellular location is the microtubule organizing center. The protein localises to the centrosome. The protein resides in the nucleus. It is found in the nucleolus. Its function is as follows. Involved in sterol-regulated ubiquitination and degradation of HMG-CoA reductase HMGCR. Involved in positive regulation of AMPA-selective glutamate receptor GRIA2 recycling to the cell surface. Acts as a negative regulator of hepatocyte growth during regeneration. In terms of biological role, may contribute to the regulation of translation during cell-cycle progression. May contribute to the regulation of cell proliferation. May be involved in centrosome assembly. Modulates stabilization and nucleolar localization of tumor suppressor CDKN2A and enhances association between CDKN2A and NPM1. The polypeptide is Transmembrane and ubiquitin-like domain-containing protein 1 (Tmub1) (Rattus norvegicus (Rat)).